The chain runs to 334 residues: F-box only protein 16 (334 aa).

Residues 86-132 form the F-box domain; the sequence is LDFTTKLPRVLSVYIFSFLDPRSLCRCAQVSWYWKSLAELDQLWMLK. 2 disordered regions span residues 168–222 and 314–334; these read PKTP…WRSS and LEHL…QSQS. Over residues 194 to 204 the composition is skewed to low complexity; sequence SPSLAFRSSSS. Positions 210-222 are enriched in basic and acidic residues; it reads NPGEKELPPWRSS. Over residues 323-334 the composition is skewed to low complexity; the sequence is LQSPSPRLQSQS.

As to quaternary structure, part of a SCF (SKP1-cullin-F-box) protein ligase complex.

Probably recognizes and binds to some phosphorylated proteins and promotes their ubiquitination and degradation. The polypeptide is F-box only protein 16 (Fbxo16) (Mus musculus (Mouse)).